Here is a 407-residue protein sequence, read N- to C-terminus: Uronyl 2-sulfotransferase (407 aa).

Positions 1–20 (MKKKQQQHPGGGTDPWPHGA) are disordered. At 1 to 49 (MKKKQQQHPGGGTDPWPHGAPVGGAPPCLGSCKRRIPLLPFLRFSLRDY) the chain is on the cytoplasmic side. Residues 50-70 (GFCMATLLVFCLGSLFYQLSG) form a helical; Signal-anchor for type II membrane protein membrane-spanning segment. Residues 71 to 407 (GPPRFLLDLR…EKWLEDIYKR (337 aa)) lie on the Lumenal side of the membrane. Asn-85, Asn-141, and Asn-156 each carry an N-linked (GlcNAc...) asparagine glycan. His-169 is an active-site residue. N-linked (GlcNAc...) asparagine glycans are attached at residues Asn-174 and Asn-320. Residues 386-400 (TEEPIDDEEQDDEKW) show a composition bias toward acidic residues. The interval 386-407 (TEEPIDDEEQDDEKWLEDIYKR) is disordered.

This sequence belongs to the sulfotransferase 3 family.

Its subcellular location is the golgi apparatus membrane. Its function is as follows. Sulfotransferase that catalyzes the transfer of sulfate to the position 2 of uronyl residues in glycosaminoglycan chains. Has mainly activity toward iduronyl residues in dermatan sulfate, and weaker activity toward glucuronyl residues of chondroitin sulfate. Has no activity toward desulfated N-resulfated heparin. This chain is Uronyl 2-sulfotransferase, found in Mus musculus (Mouse).